The chain runs to 447 residues: Na(+)-translocating NADH-quinone reductase subunit A (447 aa).

The protein belongs to the NqrA family. Composed of six subunits; NqrA, NqrB, NqrC, NqrD, NqrE and NqrF.

It carries out the reaction a ubiquinone + n Na(+)(in) + NADH + H(+) = a ubiquinol + n Na(+)(out) + NAD(+). Functionally, NQR complex catalyzes the reduction of ubiquinone-1 to ubiquinol by two successive reactions, coupled with the transport of Na(+) ions from the cytoplasm to the periplasm. NqrA to NqrE are probably involved in the second step, the conversion of ubisemiquinone to ubiquinol. The sequence is that of Na(+)-translocating NADH-quinone reductase subunit A from Cellvibrio japonicus (strain Ueda107) (Pseudomonas fluorescens subsp. cellulosa).